The following is a 741-amino-acid chain: MQHSPSTTTDHIHFAARFFDRNSYTMDRRLRRPRRTEDVSSGPLLAQSKQPSLLPVTRRTGSVTAAGATATATATAGPATRTRASPSRNKVVAPPSPDLGPRTRRSSRPRSSVGPLTGSGSGSSLPIKAAIKARTPIPEVSEVSSPIRLSTSNLPMTLTTNTSSGAPNKAFNTSSVNSGNSFSRTTTSSTTTTTERIEIRAEGDGEVDTDSIRKRITERLRRSVSKTISNLAGTPVTNTEEGSRYSRSVSRSVYDDEKSSKRSYSTGEEDIDEEDELEEDQFRSFNVTRKSATPAEISCRQLKAPREFGGWLGAFLFLLLLPTAVYYLTWSCTARNACQFKHLNLGILLDVNYLTRQVFQPRVVGAFAAYQVVVFLLVALLPGRRVHLTRETYKFNCLAVSLTLLIASGVAEYLKYPVVTFVLRHYLRFCIFGLVGAFVAAAWSYWLVDTAKYNVLRQTLTNDYGRTGSFVVDFALGRQLNPKWLGRVDWKQFQYRLSLVTTLIYATCYIYQTLVWPQKPQLGEQEGYLYQAKYYWNNVNYDPATLFSASCLLFYVLDAIIFEHHLSSSFELQHEGYGCLLLLRYAATPYLLTAVTKYFYEQRVPISCWYAPLAVAALLSLGLLVKRFSCAYKYKYRLNSQSPIFANIETIHTYQGSRLLLSGMWGWVRQPNYLGDIVALLALAAPMALRPAWPPVLGLSLIILLLLHRATRANARNQARYHSSWQRYSTQVRSYILPRVY.

Residues 29 to 126 (RLRRPRRTED…TGSGSGSSLP (98 aa)) form a disordered region. Composition is skewed to low complexity over residues 57–84 (TRRT…RTRA) and 109–126 (PRSS…SSLP). Position 111 is a phosphoserine (S111). Phosphothreonine is present on T135. S144 bears the Phosphoserine mark. Residues 160-184 (TNTSSGAPNKAFNTSSVNSGNSFSR) show a composition bias toward polar residues. The tract at residues 160-194 (TNTSSGAPNKAFNTSSVNSGNSFSRTTTSSTTTTT) is disordered. Residues 185 to 194 (TTTSSTTTTT) show a composition bias toward low complexity. Residues S223 and S225 each carry the phosphoserine modification. Polar residues predominate over residues 231-240 (LAGTPVTNTE). The interval 231–277 (LAGTPVTNTEEGSRYSRSVSRSVYDDEKSSKRSYSTGEEDIDEEDEL) is disordered. Residues T234 and T237 each carry the phosphothreonine modification. Phosphoserine is present on residues S243, S246, S248, S250, and S263. A Phosphothreonine modification is found at T266. Residues 267–277 (GEEDIDEEDEL) are compositionally biased toward acidic residues. A Phosphoserine modification is found at S284. At T288 the chain carries Phosphothreonine. A Phosphoserine modification is found at S291. T293 carries the post-translational modification Phosphothreonine. S298 carries the post-translational modification Phosphoserine. 8 helical membrane-spanning segments follow: residues 308-328 (FGGW…VYYL), 363-383 (VVGA…LLPG), 402-422 (LTLL…VTFV), 429-449 (FCIF…WLVD), 497-517 (LSLV…LVWP), 543-563 (PATL…IIFE), 577-599 (YGCL…TKYF), and 604-624 (VPIS…LGLL). 2 positions are modified to phosphoserine: S640 and S642. Residues 687–707 (MALRPAWPPVLGLSLIILLLL) form a helical membrane-spanning segment.

Belongs to the ERG4/ERG24 family. Interacts directly with LAM.

It localises to the nucleus inner membrane. Functionally, anchors the lamina and the heterochromatin to the inner nuclear membrane. The protein is Lamin-B receptor of Drosophila melanogaster (Fruit fly).